The primary structure comprises 522 residues: Peptide methionine sulfoxide reductase MsrA/MsrB (522 aa).

One can recognise a Thioredoxin domain in the interval 17-174 (LALGACSPKI…ALALIRNPNA (158 aa)). Cys-68 and Cys-71 are disulfide-bonded. Residues 199–354 (RTIYLAGGCF…PNGYCHIDIR (156 aa)) form a peptide methionine sulfoxide reductase A region. The active site involves Cys-207. The 124-residue stretch at 383–506 (DAELKRTLTE…NGASLKFIPL (124 aa)) folds into the MsrB domain. An intrachain disulfide couples Cys-440 to Cys-495. Residue Cys-495 is the Nucleophile of the active site.

It in the N-terminal section; belongs to the thioredoxin family. This sequence in the central section; belongs to the MsrA Met sulfoxide reductase family. The protein in the C-terminal section; belongs to the MsrB Met sulfoxide reductase family.

The catalysed reaction is L-methionyl-[protein] + [thioredoxin]-disulfide + H2O = L-methionyl-(S)-S-oxide-[protein] + [thioredoxin]-dithiol. The enzyme catalyses [thioredoxin]-disulfide + L-methionine + H2O = L-methionine (S)-S-oxide + [thioredoxin]-dithiol. It catalyses the reaction L-methionyl-[protein] + [thioredoxin]-disulfide + H2O = L-methionyl-(R)-S-oxide-[protein] + [thioredoxin]-dithiol. Has an important function as a repair enzyme for proteins that have been inactivated by oxidation. Catalyzes the reversible oxidation-reduction of methionine sulfoxide in proteins to methionine. This chain is Peptide methionine sulfoxide reductase MsrA/MsrB (msrAB), found in Neisseria gonorrhoeae.